Here is a 468-residue protein sequence, read N- to C-terminus: ATP synthase subunit beta (468 aa).

155-162 (GGAGVGKT) provides a ligand contact to ATP.

Belongs to the ATPase alpha/beta chains family. F-type ATPases have 2 components, CF(1) - the catalytic core - and CF(0) - the membrane proton channel. CF(1) has five subunits: alpha(3), beta(3), gamma(1), delta(1), epsilon(1). CF(0) has three main subunits: a(1), b(2) and c(9-12). The alpha and beta chains form an alternating ring which encloses part of the gamma chain. CF(1) is attached to CF(0) by a central stalk formed by the gamma and epsilon chains, while a peripheral stalk is formed by the delta and b chains.

It localises to the cell membrane. The enzyme catalyses ATP + H2O + 4 H(+)(in) = ADP + phosphate + 5 H(+)(out). Its function is as follows. Produces ATP from ADP in the presence of a proton gradient across the membrane. The catalytic sites are hosted primarily by the beta subunits. In Streptococcus thermophilus (strain ATCC BAA-250 / LMG 18311), this protein is ATP synthase subunit beta.